The following is a 629-amino-acid chain: tRNA uridine 5-carboxymethylaminomethyl modification enzyme MnmG (629 aa).

FAD is bound by residues 13–18, Val125, and Ser180; that span reads GGGHAG. NAD(+) is bound at residue 273-287; the sequence is GPRYCPSIEDKVMRF. Gln370 contacts FAD.

This sequence belongs to the MnmG family. In terms of assembly, homodimer. Heterotetramer of two MnmE and two MnmG subunits. The cofactor is FAD.

Its subcellular location is the cytoplasm. Functionally, NAD-binding protein involved in the addition of a carboxymethylaminomethyl (cmnm) group at the wobble position (U34) of certain tRNAs, forming tRNA-cmnm(5)s(2)U34. This Salmonella arizonae (strain ATCC BAA-731 / CDC346-86 / RSK2980) protein is tRNA uridine 5-carboxymethylaminomethyl modification enzyme MnmG.